Consider the following 432-residue polypeptide: Teosinte glume architecture 1 (432 aa).

Disordered regions lie at residues 20–55 (HAAA…GAPA) and 68–102 (ECEP…QQQC). Low complexity predominate over residues 22 to 41 (AAAPSSGGHAANAAAAGTGT). The SBP-type zinc finger occupies 102–179 (CPSCAVDGCR…DGHNRRRRKP (78 aa)). Positions 105, 110, 127, 130, 146, 149, 153, and 165 each coordinate Zn(2+). Positions 409-420 (GGGSGGGEGSSD) are enriched in gly residues. Residues 409 to 432 (GGGSGGGEGSSDGGTSSSMPFSWQ) are disordered.

Monomer and homodimer. Strongly expressed in immature ears and weakly in husks. Found in the inflorescence meristem of the developing ear, in the spikelet pair primordia, the glume primordia, the cupule forming region and other floral organs. Not detected in other tissues.

Its function is as follows. SBP transcriptional regulator probably involved in the domestication of maize. Acts as a transcriptional repressor binding to a 5'-GTAC-3' motif. May repress the growth of lateral branches in length and numbers. The sequence is that of Teosinte glume architecture 1 from Zea mays (Maize).